The following is a 1088-amino-acid chain: DNA ligase 4 (1088 aa).

Disordered regions lie at residues Met1 to Asp56 and Thr73 to Thr117. Low complexity-rich tracts occupy residues Asp25 to Lys53 and Thr73 to Thr90. The segment covering Asp95–Ser105 has biased composition (acidic residues). Glu414, Lys416, Arg421, Glu467, Phe514, Glu574, Lys579, Lys596, and Lys598 together coordinate ATP. Lys416 functions as the N6-AMP-lysine intermediate in the catalytic mechanism. Glu467 lines the Mg(2+) pocket. Mg(2+) is bound at residue Glu574. BRCT domains follow at residues Pro827–Met917 and Cys984–Asp1088.

This sequence belongs to the ATP-dependent DNA ligase family. It depends on Mg(2+) as a cofactor.

Its subcellular location is the nucleus. The catalysed reaction is ATP + (deoxyribonucleotide)n-3'-hydroxyl + 5'-phospho-(deoxyribonucleotide)m = (deoxyribonucleotide)n+m + AMP + diphosphate.. Functionally, DNA ligase involved in DNA non-homologous end joining (NHEJ); required for double-strand break (DSB) repair. In Dictyostelium discoideum (Social amoeba), this protein is DNA ligase 4 (lig4).